The chain runs to 85 residues: MLTIRLALGGSKKRPFYHLTVTDSRNARDGSHKEQVGFFNPVARGQEIRLSVNEERVNYWLSVGAQTSERVAQLLKEHNKTKAAA.

Belongs to the bacterial ribosomal protein bS16 family.

This chain is Small ribosomal subunit protein bS16, found in Pseudomonas savastanoi pv. phaseolicola (strain 1448A / Race 6) (Pseudomonas syringae pv. phaseolicola (strain 1448A / Race 6)).